We begin with the raw amino-acid sequence, 426 residues long: Target of rapamycin complex 2 subunit AVO2 (426 aa).

ANK repeat units lie at residues 4-33, 39-68, 74-104, 108-137, and 141-171; these read EPSV…DLLT, NGWS…DKHE, KGNT…FINH, NGRA…DLWV, and NGDT…SLDD. The interval 259 to 302 is disordered; that stretch reads STHTTSGNGGNRRSSITNPVFNPRKPTLSTDSFSSSSNSSSRLR. Polar residues predominate over residues 260–278; the sequence is THTTSGNGGNRRSSITNPV. A compositionally biased stretch (low complexity) spans 285–302; that stretch reads TLSTDSFSSSSNSSSRLR. A phosphoserine mark is found at S315 and S350. A compositionally biased stretch (polar residues) spans 350 to 359; the sequence is SNDNVRGDSQ. The tract at residues 350 to 392 is disordered; sequence SNDNVRGDSQTATINDDGGGGNGGDATIGMGLRKDPDDENENK. The span at 366 to 375 shows a compositional bias: gly residues; sequence DGGGGNGGDA. Residues 381 to 392 are compositionally biased toward basic and acidic residues; sequence LRKDPDDENENK.

In terms of assembly, the target of rapamycin complex 2 (TORC2) is composed of at least AVO1, AVO2, BIT61, LST8, TOR2 and TSC11. TORC2 forms a homodimer. Contrary to TORC1, TORC2 does not bind to and is not sensitive to FKBP-rapamycin. AVO2 is peripherally associated to AVO1 and TSC11.

The protein resides in the cell membrane. Its subcellular location is the vacuole membrane. Component of TORC2, which regulates cell cycle-dependent polarization of the actin-cytoskeleton and cell wall integrity. TORC2 controls polarity of the actin cytoskeleton, which is required for orienting the secretory pathway toward discrete growth sites, via the RHO1/PKC1/MAPK cell integrity pathway. This is Target of rapamycin complex 2 subunit AVO2 (AVO2) from Saccharomyces cerevisiae (strain ATCC 204508 / S288c) (Baker's yeast).